Consider the following 1318-residue polypeptide: DNA-directed RNA polymerase subunit beta' (1318 aa).

The Zn(2+) site is built by Cys-221, Cys-295, Cys-302, and Cys-305.

It belongs to the RNA polymerase beta' chain family. RpoC2 subfamily. As to quaternary structure, in cyanobacteria the RNAP catalytic core is composed of 2 alpha, 1 beta, 1 beta', 1 gamma and 1 omega subunit. When a sigma factor is associated with the core the holoenzyme is formed, which can initiate transcription. The cofactor is Zn(2+).

It catalyses the reaction RNA(n) + a ribonucleoside 5'-triphosphate = RNA(n+1) + diphosphate. DNA-dependent RNA polymerase catalyzes the transcription of DNA into RNA using the four ribonucleoside triphosphates as substrates. This chain is DNA-directed RNA polymerase subunit beta', found in Synechococcus sp. (strain ATCC 27144 / PCC 6301 / SAUG 1402/1) (Anacystis nidulans).